The sequence spans 827 residues: Periplasmic nitrate reductase (827 aa).

Positions 1 to 34 form a signal peptide, tat-type signal; that stretch reads MSLTRRDFIKANAVPATAAAAGLATPAIAQPAKA. Residues 36–92 enclose the 4Fe-4S Mo/W bis-MGD-type domain; it reads IRWDKGVCRFCGTGCSVLVGVQDGRVVATQGDPDSPVNRGLNCIKGYFLSKIMYGED. Cysteine 43, cysteine 46, cysteine 50, and cysteine 78 together coordinate [4Fe-4S] cluster. Mo-bis(molybdopterin guanine dinucleotide) contacts are provided by residues lysine 80, glutamine 148, asparagine 173, cysteine 177, 210–217, 241–245, 260–262, methionine 371, glutamine 375, asparagine 481, 507–508, lysine 530, aspartate 557, and 717–726; these read WGSNMAEM, STFEH, QTD, SD, and TGRVLEHWHS. Phenylalanine 793 serves as a coordination point for substrate. Mo-bis(molybdopterin guanine dinucleotide) is bound by residues asparagine 801 and lysine 818.

Belongs to the prokaryotic molybdopterin-containing oxidoreductase family. NasA/NapA/NarB subfamily. As to quaternary structure, component of the periplasmic nitrate reductase NapAB complex composed of NapA and NapB. [4Fe-4S] cluster serves as cofactor. Mo-bis(molybdopterin guanine dinucleotide) is required as a cofactor. Post-translationally, predicted to be exported by the Tat system. The position of the signal peptide cleavage has not been experimentally proven.

It localises to the periplasm. It carries out the reaction 2 Fe(II)-[cytochrome] + nitrate + 2 H(+) = 2 Fe(III)-[cytochrome] + nitrite + H2O. Its function is as follows. Catalytic subunit of the periplasmic nitrate reductase complex NapAB. Receives electrons from NapB and catalyzes the reduction of nitrate to nitrite. This chain is Periplasmic nitrate reductase, found in Paramagnetospirillum magnetotacticum (Aquaspirillum magnetotacticum).